The sequence spans 430 residues: Enolase (430 aa).

Gln-163 contributes to the (2R)-2-phosphoglycerate binding site. The Proton donor role is filled by Glu-205. Residues Asp-242, Glu-286, and Asp-313 each contribute to the Mg(2+) site. (2R)-2-phosphoglycerate contacts are provided by Lys-338, Arg-367, Ser-368, and Lys-389. Lys-338 acts as the Proton acceptor in catalysis.

It belongs to the enolase family. The cofactor is Mg(2+).

Its subcellular location is the cytoplasm. It is found in the secreted. The protein localises to the cell surface. The enzyme catalyses (2R)-2-phosphoglycerate = phosphoenolpyruvate + H2O. Its pathway is carbohydrate degradation; glycolysis; pyruvate from D-glyceraldehyde 3-phosphate: step 4/5. Its function is as follows. Catalyzes the reversible conversion of 2-phosphoglycerate (2-PG) into phosphoenolpyruvate (PEP). It is essential for the degradation of carbohydrates via glycolysis. The polypeptide is Enolase (Symbiobacterium thermophilum (strain DSM 24528 / JCM 14929 / IAM 14863 / T)).